The chain runs to 126 residues: Arginine decarboxylase proenzyme (126 aa).

The Schiff-base intermediate with substrate; via pyruvic acid role is filled by Ser-74. Ser-74 carries the pyruvic acid (Ser); by autocatalysis modification. The Proton acceptor; for processing activity role is filled by His-79. Cys-94 functions as the Proton donor; for catalytic activity in the catalytic mechanism.

This sequence belongs to the prokaryotic AdoMetDC family. Type 1 subfamily. In terms of assembly, heterooctamer of four alpha and four beta chains arranged as a tetramer of alpha/beta heterodimers. It depends on pyruvate as a cofactor. Is synthesized initially as an inactive proenzyme. Formation of the active enzyme involves a self-maturation process in which the active site pyruvoyl group is generated from an internal serine residue via an autocatalytic post-translational modification. Two non-identical subunits are generated from the proenzyme in this reaction, and the pyruvate is formed at the N-terminus of the alpha chain, which is derived from the carboxyl end of the proenzyme. The post-translation cleavage follows an unusual pathway, termed non-hydrolytic serinolysis, in which the side chain hydroxyl group of the serine supplies its oxygen atom to form the C-terminus of the beta chain, while the remainder of the serine residue undergoes an oxidative deamination to produce ammonia and the pyruvoyl group blocking the N-terminus of the alpha chain.

It carries out the reaction L-arginine + H(+) = agmatine + CO2. It participates in amine and polyamine biosynthesis; agmatine biosynthesis; agmatine from L-arginine: step 1/1. Its function is as follows. Specifically catalyzes the decarboxylation of L-arginine to agmatine. Has no S-adenosylmethionine decarboxylase (AdoMetDC) activity. The chain is Arginine decarboxylase proenzyme from Pyrobaculum aerophilum (strain ATCC 51768 / DSM 7523 / JCM 9630 / CIP 104966 / NBRC 100827 / IM2).